We begin with the raw amino-acid sequence, 575 residues long: Epsin-1 (575 aa).

Positions 11, 25, 30, 63, and 73 each coordinate a 1,2-diacyl-sn-glycero-3-phospho-(1D-myo-inositol-4,5-bisphosphate). The 133-residue stretch at 12 to 144 (NIVHNYSEAE…RDEDRLREER (133 aa)) folds into the ENTH domain. Residues 150 to 186 (TKEKLAQTATASSAAVGSGPPPEAEQAWPQSSGEEEL) form a disordered region. Residues 157-167 (TATASSAAVGS) show a composition bias toward low complexity. 3 UIM domains span residues 183 to 202 (EEEL…ADQP), 208 to 227 (EDDV…HDKE), and 233 to 252 (GDDL…TGGK). The interval 264 to 575 (FTTPAPPQAS…PAPNTNPFLL (312 aa)) is disordered. 8 tandem repeats follow at residues 274–276 (DPW), 294–296 (DPW), 306–308 (DPW), 319–321 (DPW), 332–334 (DPW), 349–351 (DPW), 367–369 (DPW), and 377–379 (DPW). The segment at 274-379 (DPWGGPASVP…APAPAFSDPW (106 aa)) is 8 X 3 AA repeats of D-P-W. Low complexity-rich tracts occupy residues 279–299 (PASV…WGGP) and 306–316 (DPWGGAAPTPA). Positions 332–346 (DPWGGTPAPAAGEGP) are enriched in low complexity. Over residues 367 to 379 (DPWAPAPAFSDPW) the composition is skewed to low complexity. The residue at position 382 (S382) is a Phosphoserine. The [DE]-X(1,2)-F-X-X-[FL]-X-X-X-R motif motif lies at 401–410 (DEFSDFDRLR). Residues S418 and S419 each carry the phosphoserine modification. The residue at position 420 (T420) is a Phosphothreonine. 3 positions are modified to phosphoserine: S434, S446, and S453. Residues 453–467 (SPPPAATPTPTPPTR) are compositionally biased toward pro residues. Phosphothreonine occurs at positions 459, 463, and 469. The residue at position 472 (S472) is a Phosphoserine. Position 493 is a phosphothreonine (T493). 2 tandem repeats follow at residues 501 to 503 (NPF) and 517 to 519 (NPF). Residues 501-573 (NPFLPSGAPP…GPPAPNTNPF (73 aa)) are 3 X 3 AA repeats of N-P-F. At R533 the chain carries Omega-N-methylarginine. Positions 556–569 (GLPPMMPPGPPAPN) are enriched in pro residues. The stretch at 571–573 (NPF) is repeat 3.

Belongs to the epsin family. In terms of assembly, monomer. Binds clathrin and ZBTB16/ZNF145. Binds ubiquitinated proteins. Interacts with RALBP1 in a complex also containing NUMB and TFAP2A during interphase and mitosis. Interacts with AP2B1. Interacts with UBQLN2. Interacts with ITSN1. Interacts with AP2A1 and AP2A2. Interacts with REPS2; the interaction is direct. Interacts with EPS15; the interaction is direct. Interacts with ENTREP1. In terms of processing, phosphorylated on serine and/or threonine residues in mitotic cells. Phosphorylation reduces interaction with REPS2, AP-2 and the membrane fraction. Depolarization of synaptosomes results in dephosphorylation. Post-translationally, ubiquitinated.

Its subcellular location is the cytoplasm. The protein localises to the cell membrane. It is found in the nucleus. The protein resides in the membrane. It localises to the clathrin-coated pit. Its function is as follows. Binds to membranes enriched in phosphatidylinositol 4,5-bisphosphate (PtdIns(4,5)P2). Modifies membrane curvature and facilitates the formation of clathrin-coated invaginations. Regulates receptor-mediated endocytosis. The protein is Epsin-1 (Epn1) of Mus musculus (Mouse).